Consider the following 427-residue polypeptide: Glutamate-1-semialdehyde 2,1-aminomutase (427 aa).

N6-(pyridoxal phosphate)lysine is present on K265.

This sequence belongs to the class-III pyridoxal-phosphate-dependent aminotransferase family. HemL subfamily. As to quaternary structure, homodimer. The cofactor is pyridoxal 5'-phosphate.

The protein resides in the cytoplasm. The catalysed reaction is (S)-4-amino-5-oxopentanoate = 5-aminolevulinate. Its pathway is porphyrin-containing compound metabolism; protoporphyrin-IX biosynthesis; 5-aminolevulinate from L-glutamyl-tRNA(Glu): step 2/2. In Burkholderia ambifaria (strain MC40-6), this protein is Glutamate-1-semialdehyde 2,1-aminomutase.